The following is a 445-amino-acid chain: Gamma-glutamyl phosphate reductase (445 aa).

Belongs to the gamma-glutamyl phosphate reductase family.

The protein resides in the cytoplasm. It carries out the reaction L-glutamate 5-semialdehyde + phosphate + NADP(+) = L-glutamyl 5-phosphate + NADPH + H(+). It participates in amino-acid biosynthesis; L-proline biosynthesis; L-glutamate 5-semialdehyde from L-glutamate: step 2/2. Functionally, catalyzes the NADPH-dependent reduction of L-glutamate 5-phosphate into L-glutamate 5-semialdehyde and phosphate. The product spontaneously undergoes cyclization to form 1-pyrroline-5-carboxylate. The chain is Gamma-glutamyl phosphate reductase from Synechococcus sp. (strain RCC307).